The chain runs to 232 residues: Lipoarabinomannan carrier protein LprG (232 aa).

A signal peptide spans 1 to 21; sequence MQTRLTAILAAFLTAVALLAG. The N-palmitoyl cysteine moiety is linked to residue Cys-22. Cys-22 carries the S-diacylglycerol cysteine lipid modification.

It belongs to the LppX/LprAFG lipoprotein family. In terms of processing, modified by Lgt on Cys-22 with an S-linked diacylglyceral, signal peptide is removed by LspA, Cys-22 is further modifed with a fatty acid on its amino group by Lnt yielding a triacylated protein.

The protein localises to the cell inner membrane. In terms of biological role, helps membrane protein MHAS_02168/C731_2106 (P55) transport triacylglycerides (TAG) across the inner cell membrane into the periplasm and probably ultimately to the outer membrane. Binds TAG in its hydrophobic cavity and transfers it between lipid bilayers. TAG probably regulates lipid metabolism and growth regulation and plays a structural role in the outer membrane. Also binds mannosides, lipoarabinomannan and lipomannan and various glycolipids in the same cavity. The lprG-MHAS_02167/C731_2107 operon complements the vancomycin sensitivity of an M.smegmatis knockout of the same operon. The protein is Lipoarabinomannan carrier protein LprG of Mycolicibacterium hassiacum (strain DSM 44199 / CIP 105218 / JCM 12690 / 3849) (Mycobacterium hassiacum).